We begin with the raw amino-acid sequence, 187 residues long: UPF0301 protein SG2023 (187 aa).

Belongs to the UPF0301 (AlgH) family.

The sequence is that of UPF0301 protein SG2023 from Sodalis glossinidius (strain morsitans).